A 191-amino-acid polypeptide reads, in one-letter code: MKKELLEWIISIAVAFVILFIVGKFIVTPYTIKGESMDPTLKDGERVAVNIIGYKTGGLEKGNVVVFHANKNDDYVKRVIGVPGDKVEYKNDTLYVNGKKQDEPYLNYNLKHKQGDYITGTFQVKDLPNANPKSNVIPKGKYLVLGDNREVSKDSRAFGLIDEDQIVGKVSFRFWPFSEFKHNFNPENTKN.

Topologically, residues Met1–Glu7 are cytoplasmic. The helical transmembrane segment at Trp8 to Thr28 threads the bilayer. At Pro29 to Asn191 the chain is on the extracellular side. Residues Ser36 and Lys77 contribute to the active site.

The protein belongs to the peptidase S26 family.

The protein localises to the cell membrane. The catalysed reaction is Cleavage of hydrophobic, N-terminal signal or leader sequences from secreted and periplasmic proteins.. Its function is as follows. Essential for cell viability. This is Signal peptidase IB (spsB) from Staphylococcus aureus (strain Mu50 / ATCC 700699).